Here is a 1086-residue protein sequence, read N- to C-terminus: Lysine-specific demethylase 4B (1086 aa).

The JmjN domain occupies 15–57 (IMTFRPTMDEFRDFNRYVAYIESQGAHRAGLAKIIPPKEWKPR). Y133 contributes to the 2-oxoglutarate binding site. A JmjC domain is found at 146-309 (VAQWNIGNLR…YGKVATQCTC (164 aa)). Fe cation is bound by residues H189 and E191. 2-oxoglutarate is bound by residues N199 and K207. Positions 235 and 241 each coordinate Zn(2+). Residue K242 coordinates 2-oxoglutarate. H277 is a binding site for Fe cation. Zn(2+) is bound by residues C307 and C309. A compositionally biased stretch (basic and acidic residues) spans 379 to 395 (SRPWRKAEEERRREPTR). 2 disordered regions span residues 379-536 (SRPW…PPGA) and 575-624 (PMEL…LSVV). Positions 401–410 (SHRRRSQPKK) are enriched in basic residues. The span at 441–450 (MPEDEEEEEL) shows a compositional bias: acidic residues. Residues 456 to 467 (HEAEGVEEDGRG) are compositionally biased toward basic and acidic residues. The segment covering 468-480 (KPRPTKARNKKKT) has biased composition (basic residues). Over residues 512–522 (GPAMGPMAAEG) the composition is skewed to low complexity. Residues 585–597 (QAQAGDSQGTTPF) show a composition bias toward polar residues. K599 is subject to N6-acetyllysine. The segment at 719 to 777 (MCFTSSGENTEPLPANSYVGEDGTSPLISCAHCCLQVHASCYGVRPELAKEGWTCSRCA) adopts a PHD-type 1 zinc-finger fold. The C2HC pre-PHD-type zinc-finger motif lies at 782 to 815 (TAECCLCNLRGGALQRTTEHRWIHVICAIAVPEV). The PHD-type 2 zinc finger occupies 838–895 (LKCIYCRKRMKRVSGACIQCSYEHCSTSFHVTCAHAAGVLMEPDDWPYVVSITCLKHR). Tudor domains follow at residues 905–962 (RTVS…CLRL) and 963–1019 (GPPP…EELP). A disordered region spans residues 1024-1043 (SRLSLSTGTPQEPSFSGDDV). Positions 1026-1037 (LSLSTGTPQEPS) are enriched in polar residues.

Belongs to the JHDM3 histone demethylase family. It depends on Fe(2+) as a cofactor.

It localises to the nucleus. The enzyme catalyses N(6),N(6),N(6)-trimethyl-L-lysyl(9)-[histone H3] + 2 2-oxoglutarate + 2 O2 = N(6)-methyl-L-lysyl(9)-[histone H3] + 2 formaldehyde + 2 succinate + 2 CO2. In terms of biological role, histone demethylase that specifically demethylates 'Lys-9' of histone H3, thereby playing a role in histone code. Does not demethylate histone H3 'Lys-4', H3 'Lys-27', H3 'Lys-36' nor H4 'Lys-20'. Only able to demethylate trimethylated H3 'Lys-9', with a weaker activity than KDM4A, KDM4C and KDM4D. Demethylation of Lys residue generates formaldehyde and succinate. Plays a critical role in the development of the central nervous system (CNS). The protein is Lysine-specific demethylase 4B (Kdm4b) of Mus musculus (Mouse).